An 842-amino-acid polypeptide reads, in one-letter code: DNA topoisomerase-like protein cin-4 (842 aa).

Over residues 1–26 (MSEEDRNVFTSIDKKGGGSKQMDDLN) the composition is skewed to basic and acidic residues. Positions 1–50 (MSEEDRNVFTSIDKKGGGSKQMDDLNQKCPKRKTSKLKGIPKLEDANDAG) are disordered. The Topo IIA-type catalytic domain occupies 314 to 783 (IPCLVDGLKP…TWQDLWITDL (470 aa)).

The protein belongs to the type II topoisomerase family.

Its function is as follows. Plays a role in the removal of cohesin from kinetochores on mitotic chromosomes and is required for centromere resolution. This chain is DNA topoisomerase-like protein cin-4, found in Caenorhabditis elegans.